The chain runs to 413 residues: MARKTKPLTDTEIKAAKPKDADYQLYDGDGLTLLIKSSGSKLWQFRYYRPLTKQRTKQSFGAYPAVSLSDARKLRAESKVLLAKDIDPQEHQKEQVRNSQEAKTNTFLLVAERWWNVKKTSVTEDYADDIWRSLERDIFPAIGDISITEIKAHTLVKAVQPVQARGALETVRRLCQRINEVMIYAQNTGLIDAVPSVNIGKAFEKPQKKNMPSIRPDQLPQLMHTMRTASISMSTRCLFMWQLLTITRPAEAAEARWDEIDFNASEWKIPAARMKMNRDHTVPLSDGALAILEMMKPLSGGREFIFPSRIKPNQPMNSQTVNAALKRAGLGGVLVSHGLRSIASTALNEEGFPPDVIEAALAHVDKNEVRRAYNRSDYLEQRRPMMQWWADLVKAADSGSIVLTHLSKIRLVG.

A Core-binding (CB) domain is found at 105–186; sequence NTFLLVAERW…RINEVMIYAQ (82 aa). Residues 209–386 form the Tyr recombinase domain; it reads KNMPSIRPDQ…DYLEQRRPMM (178 aa). Active-site residues include arginine 248, lysine 275, histidine 337, arginine 340, and histidine 363. Residue tyrosine 373 is the O-(3'-phospho-DNA)-tyrosine intermediate of the active site.

It belongs to the 'phage' integrase family.

In terms of biological role, integrase is necessary for integration of the phage into the host genome by site-specific recombination. In conjunction with excisionase, integrase is also necessary for excision of the prophage from the host genome. Part of the cryptic P4-like prophage CP4-57, it excises the prophage when overexpressed, which also requires integration host factor (encoded by ihfA and ihfB). Overexpression of AlpA leads to excision of the CP4-57 prophage, which inactivates ssrA (the gene upstream of the prophage) that encodes tmRNA which is required to rescue stalled ribosomes in a process known as trans-translation. This Escherichia coli (strain K12) protein is Prophage integrase IntA (intA).